Here is a 603-residue protein sequence, read N- to C-terminus: Dual specificity protein phosphatase CDC14A (603 aa).

The interval 7-162 (ELIGACEFMK…GLQHGFFDFE (156 aa)) is a. Residues 163-176 (TFDAEEYEHYERVE) are linker. The segment at 177–343 (NGDFNWIVPG…QGDIFRSKLK (167 aa)) is b. Residues 179–336 (DFNWIVPGKF…KQASLWVQGD (158 aa)) form the Tyrosine-protein phosphatase domain. Residue Cys-278 is the Phosphocysteine intermediate of the active site. Position 484 is a phosphoserine (Ser-484). The span at 518 to 538 (NGSTQTPGRNYPELNNNQYTR) shows a compositional bias: polar residues. The interval 518–583 (NGSTQTPGRN…RPSFPGSLSS (66 aa)) is disordered. Low complexity-rich tracts occupy residues 539-558 (SSNSNSSSSSSGLGGNLNSS) and 573-583 (LRPSFPGSLSS). Residue Ser-592 is modified to Phosphoserine.

This sequence belongs to the protein-tyrosine phosphatase family. Non-receptor class CDC14 subfamily. In terms of assembly, interacts with KIF20A. Interaction is required to localize CDC14 to the midzone of the mitotic spindle. In terms of tissue distribution, expressed in the inner ear.

The protein resides in the nucleus. It is found in the cytoplasm. The protein localises to the cytoskeleton. It localises to the microtubule organizing center. Its subcellular location is the centrosome. The protein resides in the spindle. It is found in the cell projection. The protein localises to the kinocilium. It localises to the spindle pole. Its subcellular location is the stereocilium. The catalysed reaction is O-phospho-L-tyrosyl-[protein] + H2O = L-tyrosyl-[protein] + phosphate. It catalyses the reaction O-phospho-L-seryl-[protein] + H2O = L-seryl-[protein] + phosphate. It carries out the reaction O-phospho-L-threonyl-[protein] + H2O = L-threonyl-[protein] + phosphate. Its function is as follows. Dual-specificity phosphatase. Required for centrosome separation and productive cytokinesis during cell division. Dephosphorylates SIRT2 around early anaphase. May dephosphorylate the APC subunit FZR1/CDH1, thereby promoting APC-FZR1 dependent degradation of mitotic cyclins and subsequent exit from mitosis. Required for normal hearing. The polypeptide is Dual specificity protein phosphatase CDC14A (Cdc14a) (Mus musculus (Mouse)).